Consider the following 34-residue polypeptide: LSKKQCGADGQFCFLPGLGLNCCSGLCLIVCVPT.

Positions 1 to 4 are excised as a propeptide; sequence LSKK. The residue at position 5 (Gln-5) is a Pyrrolidone carboxylic acid. Disulfide bonds link Cys-6–Cys-23, Cys-13–Cys-27, and Cys-22–Cys-31.

In terms of tissue distribution, expressed by the venom duct.

The protein resides in the secreted. Its function is as follows. Probable toxin from a worm-hunter cone snail. Shows an excitatory activity on a majority of mouse lumbar dorsal root ganglion (DRG) neurons. Very probably inhibits the inactivation of voltage-gated sodium channels (Nav). This chain is Delta-conotoxin AtVIA, found in Conus ateralbus (Cone snail).